The chain runs to 220 residues: Type II restriction enzyme NspV (220 aa).

The catalysed reaction is Endonucleolytic cleavage of DNA to give specific double-stranded fragments with terminal 5'-phosphates.. Its function is as follows. A P subtype restriction enzyme that recognizes the double-stranded sequence 5'-TTCGAA-3' and cleaves after T-2. This chain is Type II restriction enzyme NspV, found in Nostoc sp. (strain ATCC 29411 / PCC 7524).